The chain runs to 336 residues: Holliday junction branch migration complex subunit RuvB (336 aa).

The tract at residues 4–185 (MDERLLSGES…FGVLSRLEYY (182 aa)) is large ATPase domain (RuvB-L). ATP is bound by residues Leu24, Arg25, Gly66, Lys69, Thr70, Thr71, 132–134 (EDF), Arg175, Tyr185, and Arg222. Residue Thr70 coordinates Mg(2+). A small ATPAse domain (RuvB-S) region spans residues 186–256 (TVDQLSAIVE…ITQMALELLQ (71 aa)). The interval 259–336 (KLGLDHIDHK…EHFGMEMPKV (78 aa)) is head domain (RuvB-H). 2 residues coordinate DNA: Arg314 and Arg319.

This sequence belongs to the RuvB family. In terms of assembly, homohexamer. Forms an RuvA(8)-RuvB(12)-Holliday junction (HJ) complex. HJ DNA is sandwiched between 2 RuvA tetramers; dsDNA enters through RuvA and exits via RuvB. An RuvB hexamer assembles on each DNA strand where it exits the tetramer. Each RuvB hexamer is contacted by two RuvA subunits (via domain III) on 2 adjacent RuvB subunits; this complex drives branch migration. In the full resolvosome a probable DNA-RuvA(4)-RuvB(12)-RuvC(2) complex forms which resolves the HJ.

The protein localises to the cytoplasm. The enzyme catalyses ATP + H2O = ADP + phosphate + H(+). The RuvA-RuvB-RuvC complex processes Holliday junction (HJ) DNA during genetic recombination and DNA repair, while the RuvA-RuvB complex plays an important role in the rescue of blocked DNA replication forks via replication fork reversal (RFR). RuvA specifically binds to HJ cruciform DNA, conferring on it an open structure. The RuvB hexamer acts as an ATP-dependent pump, pulling dsDNA into and through the RuvAB complex. RuvB forms 2 homohexamers on either side of HJ DNA bound by 1 or 2 RuvA tetramers; 4 subunits per hexamer contact DNA at a time. Coordinated motions by a converter formed by DNA-disengaged RuvB subunits stimulates ATP hydrolysis and nucleotide exchange. Immobilization of the converter enables RuvB to convert the ATP-contained energy into a lever motion, pulling 2 nucleotides of DNA out of the RuvA tetramer per ATP hydrolyzed, thus driving DNA branch migration. The RuvB motors rotate together with the DNA substrate, which together with the progressing nucleotide cycle form the mechanistic basis for DNA recombination by continuous HJ branch migration. Branch migration allows RuvC to scan DNA until it finds its consensus sequence, where it cleaves and resolves cruciform DNA. This is Holliday junction branch migration complex subunit RuvB from Bacillus thuringiensis (strain Al Hakam).